Reading from the N-terminus, the 87-residue chain is Acyl-CoA-binding protein (87 aa).

At Ser2 the chain carries N-acetylserine. One can recognise an ACB domain in the interval 2–87 (SQAEFDKAAE…VEELKKKYGI (86 aa)). At Lys8 the chain carries N6-acetyllysine; alternate. At Lys8 the chain carries N6-succinyllysine; alternate. An acyl-CoA is bound at residue Lys14. Lys17 carries the post-translational modification N6-succinyllysine. Lys19 carries the post-translational modification N6-acetyllysine. Phosphotyrosine is present on Tyr29. An acyl-CoA-binding positions include 29–33 (YSHYK), Lys51, Lys55, and Tyr74. At Lys51 the chain carries N6-acetyllysine. An N6-acetyllysine; alternate modification is found at Lys55. Lys55 is modified (N6-succinyllysine; alternate). Residue Lys55 is modified to N6-(2-hydroxyisobutyryl)lysine; alternate. Lys55 bears the N6-malonyllysine; alternate mark. N6-acetyllysine; alternate is present on Lys77. The residue at position 77 (Lys77) is an N6-succinyllysine; alternate.

This sequence belongs to the ACBP family. Monomer.

The protein localises to the endoplasmic reticulum. It localises to the golgi apparatus. Functionally, binds medium- and long-chain acyl-CoA esters with very high affinity and may function as an intracellular carrier of acyl-CoA esters. This chain is Acyl-CoA-binding protein (DBI), found in Chaetophractus villosus (South American armadillo).